The sequence spans 1708 residues: MAAIGRGRSLKNLRVRGRNDSGEENVPLDLTREPSDNLREILQNVARLQGVSNMRKLGHLNNFTKLLCDIGHSEEKLGFHYEDIIICLRLALLNEAKEVRAAGLRALRYLIQDSSILQKVLKLKVDYLIARCIDIQQSNEVERTQALRLVRKMITVNASLFPSSVTNSLIAVGNDGLQERDRMVRACIAIICELALQNPEVVALRGGLNTILKNVIDCQLSRINEALITTILHLLNHPKTRQYVRADVELERILAPYTDFHYRHSPDTAEGQLKEDREARFLASKMGIIATFRSWAGIINLCKPGNSGIQSLIGVLCIPNMEIRRGLLEVLYDIFRLPLPVVTEEFIEALLSVDPGRFQDSWRLSDGFVAAEAKTILPHRARSRPDLMDNYLALILSAFIRNGLLEGLVEVITNSDDHISVRATILLGELLHMANTILPHSHSHHLHCLPTLMNMAASFDIPKEKRLRASAALNCLKRFHEMKKRGPKPYSLHLDHIIQKAIATHQKRDQYLRVQKDIFILKDTEEALLINLRDSQVLQHKENLEWNWNLIGTILKWPNVNLRNYKDEQLHRFVRRLLYFYKPSSKLYANLDLDFAKAKQLTVVGCQFTEFLLESEEDGQGYLEDLVKDIVQWLNASSGMKPERSLQNNGLLTTLSQHYFLFIGTLSCHPHGVKMLEKCSVFQCLLNLCSLKNQDHLLKLTVSSLDYSRDGLARVILSKILTAATDACRLYATKHLRVLLRANVEFFNNWGIELLVTQLHDKNKTISSEALDILDEACEDKANLHALIQMKPALSHLGDKGLLLLLRFLSIPKGFSYLNERGYVAKQLEKWHREYNSKYVDLIEEQLNEALTTYRKPVDGDNYVRRSNQRLQRPHVYLPIHLYGQLVHHKTGCHLLEVQNIITELCRNVRTPDLDKWEEIKKLKASLWALGNIGSSNWGLNLLQEENVIPDILKLAKQCEVLSIRGTCVYVLGLIAKTKQGCDILKCHNWDAVRHSRKHLWPVVPDDVEQLCNELSSIPSTLSLNSESTSSRHNSESESVPSSMFILEDDRFGSSSTSTFFLDINEDTEPTFYDRSGPIKDKNSFPFFASSKLVKNRILNSLTLPNKKHRSSSDPKGGKLSSESKTSNRRIRTLTEPSVDFNHSDDFTPISTVQKTLQLETSFMGNKHIEDTGSTPSIGENDLKFTKNFGTENHRENTSRERLVVESSTSSHMKIRSQSFNTDTTTSGISSMSSSPSRETVGVDATTMDTDCGSMSTVVSTKTIKTSHYLTPQSNHLSLSKSNSVSLVPPGSSHTLPRRAQSLKAPSIATIKSLADCNFSYTSSRDAFGYATLKRLQQQRMHPSLSHSEALASPAKDVLFTDTITMKANSFESRLTPSRFMKALSYASLDKEDLLSPINQNTLQRSSSVRSMVSSATYGGSDDYIGLALPVDINDIFQVKDIPYFQTKNIPPHDDRGARAFAHDAGGLPSGTGGLVKNSFHLLRQQMSLTEIMNSIHSDASLFLESTEDTGLQEHTDDNCLYCVCIEILGFQPSNQLSAICSHSDFQDIPYSDWCEQTIHNPLEVVPSKFSGISGCSDGVSQEGSASSTKSTELLLGVKTIPDDTPMCRILLRKEVLRLVINLSSSVSTKCHETGLLTIKEKYPQTFDDICLYSEVSHLLSHCTFRLPCRRFIQELFQDVQFLQMHEEAEAVLATPPKQPIVDTSAES.

Positions 1 to 789 (MAAIGRGRSL…DKANLHALIQ (789 aa)) are interaction with NBN. 3 positions are modified to phosphoserine: S21, S35, and S265. K274 is covalently cross-linked (Glycyl lysine isopeptide (Lys-Gly) (interchain with G-Cter in ubiquitin)). The interval 521-570 (LKDTEEALLINLRDSQVLQHKENLEWNWNLIGTILKWPNVNLRNYKDEQL) is ribosome-binding domain. The ATP site is built by N543, R572, and R576. Residues 1022–1041 (LSLNSESTSSRHNSESESVP) form a disordered region. An N6-acetyllysine mark is found at K1092 and K1095. Residue T1103 is modified to Phosphothreonine. Residues 1103–1134 (TLPNKKHRSSSDPKGGKLSSESKTSNRRIRTL) are disordered. N6-acetyllysine is present on residues K1116, K1119, and K1125. At T1135 the chain carries Phosphothreonine; by RPS6KB1. S1138, S1162, and S1219 each carry phosphoserine. Positions 1204–1252 (VVESSTSSHMKIRSQSFNTDTTTSGISSMSSSPSRETVGVDATTMDTDC) are disordered. Residues 1206–1221 (ESSTSSHMKIRSQSFN) are compositionally biased toward polar residues. Low complexity predominate over residues 1222 to 1240 (TDTTTSGISSMSSSPSRET). S1235 bears the Phosphoserine; by GSK3-beta mark. T1271 is modified (phosphothreonine). Residues S1274, S1278, S1282, and S1284 each carry the phosphoserine modification. The span at 1275-1288 (NHLSLSKSNSVSLV) shows a compositional bias: low complexity. Residues 1275–1298 (NHLSLSKSNSVSLVPPGSSHTLPR) are disordered. Position 1295 is a phosphothreonine (T1295). S1302 and S1313 each carry phosphoserine. T1332 is subject to Phosphothreonine. A phosphoserine mark is found at S1346 and S1353. A Phosphothreonine modification is found at T1376. Residue S1385 is modified to Phosphoserine. The residue at position 1386 (Y1386) is a Phosphotyrosine. Phosphoserine occurs at positions 1388, 1396, and 1411. Positions 1515, 1520, and 1523 each coordinate Zn(2+). Residues S1571, S1574, S1577, and S1591 each carry the phosphoserine modification. C1651 is a binding site for Zn(2+). Position 1695 is a phosphothreonine; by GSK3-alpha and GSK3-beta (T1695).

Belongs to the RICTOR family. In terms of assembly, component of the mechanistic target of rapamycin complex 2 (mTORC2), consisting in two heterotretramers composed of MTOR, MLST8, RICTOR and MAPKAP1/SIN1. The mTORC2 core complex associates with PRR5/PROTOR1 and/or PRR5L/PROTOR2. Contrary to mTORC1, mTORC2 does not bind to and is not sensitive to FKBP12-rapamycin. Binds directly to MTOR and PRR5 within the TORC2 complex; interaction with MTOR is enhanced by deubiquitination of RICTOR by USP9X. Interaction with MAPKAP1 is not enhanced by RICTOR deubiquitination by USP9X. Interacts with CCDC28B. Interacts with NBN. Interacts with SIK3. Interacts with NCKAP1L. Interacts with kinases GSK3A and GSK3B; the interactions lead to phosphorylation of RICTOR at Thr-1695 which facilitates its FBXW7-mediated ubiquitination and subsequent degradation. Interacts with FBXW7; the interaction is enhanced by GSK3-mediated phosphorylation of Thr-1695 and results in RICTOR ubiquitination and degradation. Interacts with ARMH4 (via cytoplasmic tail); this interaction bridges ARMH4 to the mTORC2 complex and inhibits the mTORC2 kinase activity. Interacts with UBXN2A. Interacts with TSPAN8. (Microbial infection) Interacts with vaccinia virus protein F17; this interaction dysregulates MTOR. In terms of processing, phosphorylated by MTOR; when part of mTORC2. Phosphorylated at Thr-1135 by RPS6KB1 downstream of the mTORC1 complex: phosphorylation of RICTOR inhibits mTORC2 signaling by creating a binding site for 14-3-3 proteins. Phosphorylated at Thr-1695 by GSK3A and GSK3B which facilitates RICTOR ubiquitination and subsequent degradation. Phosphorylated at Ser-1235 by GSK3B in response to endoplasmic stress, inhibiting mTORC2 signaling. Post-translationally, ubiquitinated by the SCF(FBXW7) complex, leading to its degradation by the proteasome. Deubiquitinated by USP9X; deubiquitination stabilizes RICTOR and enhances its binding to MTOR, thus promoting mTORC2 complex assembly. Acetylated by EP300/p300 in response to glucose, leading to activate the mTORC2 complex. Acetylation by BLOC1S1/GCN5L1 in response to hypotoxic stress protects RICTOR against ubiquitination and subsequent degradation by the proteasome.

It is found in the cell membrane. Its subcellular location is the endoplasmic reticulum membrane. The protein resides in the lysosome membrane. Its function is as follows. Component of the mechanistic target of rapamycin complex 2 (mTORC2), which transduces signals from growth factors to pathways involved in proliferation, cytoskeletal organization, lipogenesis and anabolic output. In response to growth factors, mTORC2 phosphorylates and activates AGC protein kinase family members, including AKT (AKT1, AKT2 and AKT3), PKC (PRKCA, PRKCB and PRKCE) and SGK1. In contrast to mTORC1, mTORC2 is nutrient-insensitive. Within the mTORC2 complex, RICTOR probably acts as a molecular adapter. RICTOR is responsible for the FKBP12-rapamycin-insensitivity of mTORC2. mTORC2 plays a critical role in AKT1 activation by mediating phosphorylation of different sites depending on the context, such as 'Thr-450', 'Ser-473', 'Ser-477' or 'Thr-479', facilitating the phosphorylation of the activation loop of AKT1 on 'Thr-308' by PDPK1/PDK1 which is a prerequisite for full activation. mTORC2 catalyzes the phosphorylation of SGK1 at 'Ser-422' and of PRKCA on 'Ser-657'. The mTORC2 complex also phosphorylates various proteins involved in insulin signaling, such as FBXW8 and IGF2BP1. mTORC2 acts upstream of Rho GTPases to regulate the actin cytoskeleton, probably by activating one or more Rho-type guanine nucleotide exchange factors. mTORC2 promotes the serum-induced formation of stress-fibers or F-actin. The sequence is that of Rapamycin-insensitive companion of mTOR from Homo sapiens (Human).